A 270-amino-acid chain; its full sequence is UPF0246 protein PsycPRwf_0637 (270 aa).

This sequence belongs to the UPF0246 family.

The protein is UPF0246 protein PsycPRwf_0637 of Psychrobacter sp. (strain PRwf-1).